Consider the following 545-residue polypeptide: MSYSIGIDYGTASGRVFLINTTNGQVVSKFVKPYTHGVIESELNGLKIPHTYALQNSNDYLEIMEEGISYIVRESKIDPVNIVGIGIDFTSSTIIFTDENINPVHNLKQFKNNPHAYVKLWKHHGAYKEAEKLYQTAIENNNKWLGHYGYNVSSEWMIPKIMEVMNRAPEIMEKTAYIMEAGDWIVNKLTNKNVRSNCGLGFKAFWEEETGFHYDLFDKIDPKLSKVIQDKVSAPVVNIGEAVGKLDDKMAQKLGLSKETMVSPFIIDAHASLLGIGSEKDKEMTMVLGTSTCHLMLNEKQHQVPGISGSVKGAIIPELFAYEAGQSAVGDLFEYVAKQAPKSYVDEAANRNMTVFELMNEKIKHQMPGESGLIALDWHNGNRSVLSDSNLTGCIFGLTLQTKHEDIYRAYLEATAFGTKMIMQQYQDWHMEVEKVFACGGIPKKNAVMMDIYANVLNKKLIVMDSEYAPAIGAAILGAVSGGAHNSINDAVDAMKEPILYEINPEAEKVQRYETLFKAYKALHDIHGYKKANIMKDIQSLRVEG.

Belongs to the ribulokinase family.

The enzyme catalyses D-ribulose + ATP = D-ribulose 5-phosphate + ADP + H(+). It carries out the reaction L-ribulose + ATP = L-ribulose 5-phosphate + ADP + H(+). It participates in carbohydrate degradation; L-arabinose degradation via L-ribulose; D-xylulose 5-phosphate from L-arabinose (bacterial route): step 2/3. This is Ribulokinase from Staphylococcus aureus (strain bovine RF122 / ET3-1).